A 517-amino-acid chain; its full sequence is Dopamine receptor 4 (517 aa).

The Extracellular segment spans residues 1–46 (MLAYGSDPNAEDLYITMTPSVSTENDTTVWATEEPAAIVWRHPLLA). N-linked (GlcNAc...) asparagine glycosylation is present at Asn-25. Residues 47-67 (IALFSICLLTVAGNCLVVIAV) form a helical membrane-spanning segment. Topologically, residues 68 to 77 (CTKKYLRNPT) are cytoplasmic. The helical transmembrane segment at 78 to 98 (GYLIISLAIADLIVGVIVMPM) threads the bilayer. Residues 99–108 (NSLFEIANHT) are Extracellular-facing. The N-linked (GlcNAc...) asparagine glycan is linked to Asn-106. A helical transmembrane segment spans residues 109–129 (WLFGLMMCDVFHAMDILASTA). Over 130–159 (SIWNLCVISLDRYMAGQDPIGYRDKVSKRR) the chain is Cytoplasmic. The chain crosses the membrane as a helical span at residues 160–180 (ILMAILSVWVLSAILSFPGII). Residues 181 to 209 (WWRTSSPHLYEDQSQCLFTDSKMYVSFSS) are Extracellular-facing. The chain crosses the membrane as a helical span at residues 210-230 (LVSFYIPLFLILFAYGKVYII). Topologically, residues 231–409 (ATRHSKGMRM…YVHEQRAART (179 aa)) are cytoplasmic. The disordered stretch occupies residues 309–339 (NDRGEHNNNNTVRQPLLRGTEGCHSDSISRS). The chain crosses the membrane as a helical span at residues 410–430 (LSIVVGAFILCWTPFFVFTPL). Over 431-442 (TAFCESCFSNKE) the chain is Extracellular. A helical membrane pass occupies residues 443-463 (TIFTFVTWAGHLNSMLNPLIY). Residues 464 to 517 (SRFSRDFRRAFKQILTCQRQQKVKTAFKTPLSLVFTQLISVTQMWEQPPNTSIE) are Cytoplasmic-facing.

The protein belongs to the G-protein coupled receptor 1 family. As to expression, expressed in pharyngeal neurons I1 and I2, neurons ASG, AVL, CAN, PQR, vulva, intestine, rectal glands and rectal epithelial glands. Also expressed in neurons in ray 8 in males.

It localises to the cell membrane. Receptor for dopamine. The activity of this receptor is mediated by G proteins which activate adenylyl cyclase. In terms of antagonist responses, would be classed with the D1-like dopamine receptor group. This is Dopamine receptor 4 (dop-4) from Caenorhabditis elegans.